Consider the following 161-residue polypeptide: Zinc finger A20 and AN1 domain-containing stress-associated protein 4 (161 aa).

An A20-type zinc finger spans residues 10 to 44 (PEGHRLCVNNCGFFGSSATMNLCSNCYGDLCLKQQ). The Zn(2+) site is built by Cys-16, Cys-20, Cys-32, and Cys-35. Residues 76 to 85 (TTKKTEEKKP) are compositionally biased toward basic and acidic residues. The tract at residues 76-99 (TTKKTEEKKPIQIPTEQPSPPQRP) is disordered. The segment at 96 to 142 (PQRPNRCTVCRKRVGLTGFMCRCGTTFCGSHRYPEVHGCTFDFKSAG) adopts an AN1-type zinc-finger fold. The Zn(2+) site is built by Cys-102, Cys-105, Cys-116, Cys-118, Cys-123, His-126, His-132, and Cys-134.

In terms of biological role, may be involved in environmental stress response. The chain is Zinc finger A20 and AN1 domain-containing stress-associated protein 4 (SAP4) from Arabidopsis thaliana (Mouse-ear cress).